Reading from the N-terminus, the 502-residue chain is Protein adenylyltransferase Fic (502 aa).

The segment at 1–24 (MAMATGKATEEEQPEQGQQQQQLQ) is disordered. The segment covering 15–24 (EQGQQQQQLQ) has biased composition (low complexity). Residues 38 to 60 (FALFFIAGCLAAFGFHALTSSSG) form a helical membrane-spanning segment. 2 TPR repeats span residues 122–155 (AMGALRLAQEMYMTGKDDKAARLFEHALALAPKH) and 156–190 (PEVLLRYGEFLEHNQRNIVLADQYYFQALSINPSN). Positions 247 to 252 (SVGIEG) match the Inhibitory (S/T)XXXE(G/N) motif motif. ATP-binding positions include Glu251 and 332 to 335 (VGGH). One can recognise a Fido domain in the interval 301–436 (ITLKDILELH…IRPFVRFIAD (136 aa)). The active site involves His379. Residues 383–390 (DGNGRTSR), 415–416 (YY), and Asn423 contribute to the ATP site. The interval 478 to 502 (SPELYESGSGSGAGAGAGSGQKGMP) is disordered. Gly residues predominate over residues 486 to 502 (SGSGAGAGAGSGQKGMP).

The protein belongs to the fic family. Homodimer.

It is found in the membrane. It catalyses the reaction L-tyrosyl-[protein] + ATP = O-(5'-adenylyl)-L-tyrosyl-[protein] + diphosphate. The catalysed reaction is L-threonyl-[protein] + ATP = 3-O-(5'-adenylyl)-L-threonyl-[protein] + diphosphate. It carries out the reaction 3-O-(5'-adenylyl)-L-threonyl-[protein] + H2O = L-threonyl-[protein] + AMP + H(+). Its activity is regulated as follows. The side chain of Glu-251 determines which of the two opposing activities (AMPylase or de-AMPylase) will take place. In response to endoplasmic reticulum stress, mediates de-AMPylase activity. Adenylyltransferase activity is inhibited by the inhibitory helix present at the N-terminus: Glu-251 binds ATP and competes with ATP-binding at Arg-390, thereby preventing adenylyltransferase activity. In unstressed cells, disengagement of Glu-251 promotes adenylyltransferase activity. Activation dissociates ATP-binding from Glu-251, allowing ordered binding of the entire ATP moiety with the alpha-phosphate in an orientation that is productive for accepting an incoming target hydroxyl side chain. Its function is as follows. Protein that can both mediate the addition of adenosine 5'-monophosphate (AMP) to specific residues of target proteins (AMPylation), and the removal of the same modification from target proteins (de-AMPylation), depending on the context. The side chain of Glu-251 determines which of the two opposing activities (AMPylase or de-AMPylase) will take place. Acts as a key regulator of the unfolded protein response (UPR) by mediating AMPylation or de-AMPylation of Hsc70-3/BiP. In unstressed cells, acts as an adenylyltransferase by mediating AMPylation of Hsc70-3/BiP at 'Thr-518', thereby inactivating it. In response to endoplasmic reticulum stress, acts as a phosphodiesterase by mediating removal of ATP (de-AMPylation) from Hsc70-3/BiP at 'Thr-518', leading to restore HSPA5/BiP activity. The protein is Protein adenylyltransferase Fic of Drosophila mojavensis (Fruit fly).